A 251-amino-acid polypeptide reads, in one-letter code: Vitamin B12 import ATP-binding protein BtuD (251 aa).

In terms of domain architecture, ABC transporter spans 2–236 (IRVNSLQVDS…EVLQSVFGTS (235 aa)). 30 to 37 (GPNGCGKS) is a binding site for ATP.

This sequence belongs to the ABC transporter superfamily. Vitamin B12 importer (TC 3.A.1.13.1) family. In terms of assembly, the complex is composed of two ATP-binding proteins (BtuD), two transmembrane proteins (BtuC) and a solute-binding protein (BtuF).

The protein localises to the cell inner membrane. The catalysed reaction is an R-cob(III)alamin(out) + ATP + H2O = an R-cob(III)alamin(in) + ADP + phosphate + H(+). In terms of biological role, part of the ABC transporter complex BtuCDF involved in vitamin B12 import. Responsible for energy coupling to the transport system. The protein is Vitamin B12 import ATP-binding protein BtuD of Vibrio cholerae serotype O1 (strain ATCC 39315 / El Tor Inaba N16961).